We begin with the raw amino-acid sequence, 488 residues long: Poly(3-hydroxybutyrate) depolymerase (488 aa).

An N-terminal signal peptide occupies residues 1-27 (MVRRLWRRIAGWLAACVAILCAFPLHA). Serine 166 acts as the Charge relay system in catalysis. The region spanning 346-428 (APTGLAVTAT…AAVSATTKSA (83 aa)) is the Fibronectin type-III domain.

Belongs to the AB hydrolase superfamily. Lipase family.

It is found in the secreted. The enzyme catalyses [(3R)-hydroxybutanoate](n) + H2O = [(3R)-hydroxybutanoate](n-2) + (3R)-hydroxybutanoate dimer + H(+). It carries out the reaction [(3R)-hydroxybutanoate](n) + H2O = [(3R)-hydroxybutanoate](n-3) + (3R)-hydroxybutanoate trimer + H(+). It catalyses the reaction [(3R)-hydroxybutanoate](n) + H2O = [(3R)-hydroxybutanoate](n-1) + (R)-3-hydroxybutanoate + H(+). The catalysed reaction is [(3R)-hydroxybutanoate](n) + H2O = [(3R)-hydroxybutanoate](n-5) + (3R)-hydroxybutanoate pentamer + H(+). The enzyme catalyses [(3R)-hydroxybutanoate](n) + H2O = [(3R)-hydroxybutanoate](n-4) + (3R)-hydroxybutanoate tetramer + H(+). Functionally, this protein degrades water-insoluble and water-soluble PHB to monomeric D(-)-3-hydroxybutyrate. The sequence is that of Poly(3-hydroxybutyrate) depolymerase from Ralstonia pickettii (Burkholderia pickettii).